We begin with the raw amino-acid sequence, 712 residues long: Polyribonucleotide nucleotidyltransferase (712 aa).

Residues D487 and D493 each coordinate Mg(2+). One can recognise a KH domain in the interval P554–I613. Residues G623–K691 enclose the S1 motif domain.

The protein belongs to the polyribonucleotide nucleotidyltransferase family. Mg(2+) is required as a cofactor.

It is found in the cytoplasm. It catalyses the reaction RNA(n+1) + phosphate = RNA(n) + a ribonucleoside 5'-diphosphate. Involved in mRNA degradation. Catalyzes the phosphorolysis of single-stranded polyribonucleotides processively in the 3'- to 5'-direction. This chain is Polyribonucleotide nucleotidyltransferase, found in Bacillus cereus (strain ATCC 14579 / DSM 31 / CCUG 7414 / JCM 2152 / NBRC 15305 / NCIMB 9373 / NCTC 2599 / NRRL B-3711).